Here is a 203-residue protein sequence, read N- to C-terminus: Molybdenum cofactor guanylyltransferase (203 aa).

GTP-binding positions include 12-14 (LAG), lysine 25, asparagine 53, aspartate 71, and aspartate 101. Aspartate 101 contacts Mg(2+).

Belongs to the MobA family. In terms of assembly, monomer. Mg(2+) is required as a cofactor.

It localises to the cytoplasm. It carries out the reaction Mo-molybdopterin + GTP + H(+) = Mo-molybdopterin guanine dinucleotide + diphosphate. In terms of biological role, transfers a GMP moiety from GTP to Mo-molybdopterin (Mo-MPT) cofactor (Moco or molybdenum cofactor) to form Mo-molybdopterin guanine dinucleotide (Mo-MGD) cofactor. The chain is Molybdenum cofactor guanylyltransferase from Methylibium petroleiphilum (strain ATCC BAA-1232 / LMG 22953 / PM1).